A 128-amino-acid chain; its full sequence is Protein BEX2 (128 aa).

Arg-50 is subject to Omega-N-methylarginine. The interval 107 to 128 (SLRAVSTDPPHHDHHDEFCLMP) is disordered. The span at 115–128 (PPHHDHHDEFCLMP) shows a compositional bias: basic and acidic residues. The interval 117 to 121 (HHDHH) is his cluster. A Zn(2+)-binding site is contributed by Cys-125.

This sequence belongs to the BEX family. Interacts with LMO2, possibly leading to regulate the transcriptional activity of a DNA-binding complex containing LMO2. Interacts with OMP. As to expression, expressed in central nervous system, with high level in pituitary, cerebellum and temporal lobe. Widely expressed in breast cancer cell lines.

The protein localises to the cytoplasm. Its subcellular location is the nucleus. Functionally, regulator of mitochondrial apoptosis and G1 cell cycle in breast cancer. Protects the breast cancer cells against mitochondrial apoptosis and this effect is mediated through the modulation of BCL2 protein family, which involves the positive regulation of anti-apoptotic member BCL2 and the negative regulation of pro-apoptotic members BAD, BAK1 and PUMA. Required for the normal cell cycle progression during G1 in breast cancer cells through the regulation of CCND1 and CDKN1A. Regulates the level of PP2A regulatory subunit B and PP2A phosphatase activity. In absence of reductive stress, acts as a pseudosubstrate for the CRL2(FEM1B) complex: associates with FEM1B via zinc, thereby preventing association between FEM1B and its substrates. The polypeptide is Protein BEX2 (BEX2) (Homo sapiens (Human)).